Consider the following 262-residue polypeptide: Short-chain Z-isoprenyl diphosphate synthase (262 aa).

Asp-40 is an active-site residue. Asp-40 serves as a coordination point for Mg(2+). Residues Gly-41–Arg-44, Trp-45, and Ser-86–Glu-88 contribute to the substrate site. Residue Asn-89 is the Proton acceptor of the active site. Substrate is bound by residues Arg-92, Arg-211, and Arg-217–Ser-219. Position 230 (Glu-230) interacts with Mg(2+).

The protein belongs to the UPP synthase family. Z-FPP synthase subfamily. The cofactor is Mg(2+).

It carries out the reaction isopentenyl diphosphate + (2E)-geranyl diphosphate = (2Z,6E)-farnesyl diphosphate + diphosphate. It functions in the pathway phospholipid metabolism; decaprenyl phosphate biosynthesis. In terms of biological role, generates Z-farnesyl diphosphate (Z-FPP) from isopentenyl pyrophosphate (IPP). Z-FPP is the precursor of decaprenyl diphosphate, which has a central role in the biosynthesis of the mycobacterial cell wall. The sequence is that of Short-chain Z-isoprenyl diphosphate synthase from Mycobacterium leprae (strain TN).